The sequence spans 563 residues: Arginine--tRNA ligase (563 aa).

The 'HIGH' region signature appears at 121-131 (PNIAKPFSIGH).

This sequence belongs to the class-I aminoacyl-tRNA synthetase family. In terms of assembly, monomer.

It localises to the cytoplasm. It catalyses the reaction tRNA(Arg) + L-arginine + ATP = L-arginyl-tRNA(Arg) + AMP + diphosphate. In Streptococcus pyogenes serotype M18 (strain MGAS8232), this protein is Arginine--tRNA ligase.